Consider the following 203-residue polypeptide: Endo-type membrane-bound lytic murein transglycosylase A (203 aa).

A signal peptide spans 1–15 (MKLRWFAFLIVLLAG). Cys16 is lipidated: N-palmitoyl cysteine. Residue Cys16 is the site of S-diacylglycerol cysteine attachment.

This sequence belongs to the transglycosylase Slt family.

It localises to the cell outer membrane. The catalysed reaction is Endolytic cleavage of the (1-&gt;4)-beta-glycosidic linkage between N-acetylmuramic acid (MurNAc) and N-acetylglucosamine (GlcNAc) residues in peptidoglycan with concomitant formation of a 1,6-anhydrobond in the MurNAc residue.. Murein-degrading enzyme. May play a role in recycling of muropeptides during cell elongation and/or cell division. Preferentially cleaves at a distance of more than two disaccharide units from the ends of the glycan chain. In Escherichia coli O127:H6 (strain E2348/69 / EPEC), this protein is Endo-type membrane-bound lytic murein transglycosylase A.